The sequence spans 471 residues: Uronate isomerase (471 aa).

It belongs to the metallo-dependent hydrolases superfamily. Uronate isomerase family.

It catalyses the reaction D-glucuronate = D-fructuronate. The enzyme catalyses aldehydo-D-galacturonate = keto-D-tagaturonate. It participates in carbohydrate metabolism; pentose and glucuronate interconversion. The chain is Uronate isomerase from Xanthomonas campestris pv. campestris (strain 8004).